The sequence spans 233 residues: tRNA pseudouridine synthase B (233 aa).

The Nucleophile role is filled by Asp-48.

This sequence belongs to the pseudouridine synthase TruB family. Type 1 subfamily.

It catalyses the reaction uridine(55) in tRNA = pseudouridine(55) in tRNA. In terms of biological role, responsible for synthesis of pseudouridine from uracil-55 in the psi GC loop of transfer RNAs. The polypeptide is tRNA pseudouridine synthase B (Bacteroides fragilis (strain ATCC 25285 / DSM 2151 / CCUG 4856 / JCM 11019 / LMG 10263 / NCTC 9343 / Onslow / VPI 2553 / EN-2)).